The sequence spans 523 residues: Endoglucanase 19 (523 aa).

An N-terminal signal peptide occupies residues 1–52; that stretch reads MCSWSLSSHTLTSPVRQAAMEPKSSSCGGAGIRLRLLVVLHLLLLVPSSAMA. The active-site Nucleophile is the Asp-107. The N-linked (GlcNAc...) asparagine glycan is linked to Asn-279. Catalysis depends on residues His-442, Asp-493, and Glu-502.

Belongs to the glycosyl hydrolase 9 (cellulase E) family.

Its subcellular location is the secreted. The catalysed reaction is Endohydrolysis of (1-&gt;4)-beta-D-glucosidic linkages in cellulose, lichenin and cereal beta-D-glucans.. This is Endoglucanase 19 from Oryza sativa subsp. japonica (Rice).